A 247-amino-acid polypeptide reads, in one-letter code: MVDREQLVQKARLAEQAERYDDMAAAMKNVTELNEPLSNEERNLLSVAYKNVVGARRSSWRVISSIEQKTSADGNEKKIEMVRAYREKIEKELEAVCQDVLSLLDNYLIKNCSETQIESKVFYLKMKGDYYRYLAEVATGEKRATVVESSEKAYSEAHEISKEHMQPTHPIRLGLALNYSVFYYEIQNAPEQACHLAKTAFDDAIAELDTLNEDSYKDSTLIMQLLRDNLTLWTSDQQDDDGGEGNN.

Residue methionine 1 is modified to N-acetylmethionine. Valine 2 is subject to N-acetylvaline; in 14-3-3 protein gamma, N-terminally processed. Residues 2–247 (VDREQLVQKA…QDDDGGEGNN (246 aa)) are interaction with SPATA18/MIEAP. Serine 71 carries the phosphoserine modification. Phosphotyrosine is present on tyrosine 133. Position 145 is a phosphothreonine (threonine 145). The residue at position 215 (serine 215) is a Phosphoserine. Threonine 234 bears the Phosphothreonine mark. Serine 235 bears the Phosphoserine mark.

This sequence belongs to the 14-3-3 family. Homodimer. Part of a complex that contains DSG3, PKP1, YAP1 and YWHAG; the complex is required for localization of DSG3 and YAP1 to the cell membrane in keratinocytes. Interacts with SAMSN1. Interacts with RAF1, SSH1 and CRTC2/TORC2. Interacts with ABL1 (phosphorylated form); the interaction retains it in the cytoplasm. Interacts with GAB2. Interacts with MDM4 (phosphorylated); negatively regulates MDM4 activity toward TP53. Interacts with PKA-phosphorylated AANAT and SIRT2. Interacts with the 'Thr-369' phosphorylated form of DAPK2. Interacts with PI4KB, TBC1D22A and TBC1D22B. Interacts with SLITRK1. Interacts with LRRK2; this interaction is dependent on LRRK2 phosphorylation. Interacts with MARK2 and MARK3. Interacts with MEFV. Interacts with ENDOG, TSC2 and PIK3C3; interaction with ENDOG weakens its interaction with TSC2 and PIK3C3. Interacts with (phosphorylated) WDR24. Interacts with BEST1; this interaction promotes L-glutamate channel activity leading to the positive regulation of NMDA glutamate receptor activity through the L-glutamate secretion. Interacts with PKP1 (when phosphorylated); the interaction results in translocation of PKP1 to the cytoplasm and loss of intercellular adhesion in keratinocytes. Interacts with SPATA18/MIEAP; a protein that also plays a role in MALM. In terms of processing, phosphorylated by various PKC isozymes.

It localises to the cytoplasm. Its subcellular location is the cytosol. The protein resides in the mitochondrion matrix. In terms of biological role, adapter protein implicated in the regulation of a large spectrum of both general and specialized signaling pathways. Binds to a large number of partners, usually by recognition of a phosphoserine or phosphothreonine motif. Binding generally results in the modulation of the activity of the binding partner. Promotes inactivation of WDR24 component of the GATOR2 complex by binding to phosphorylated WDR24. Participates in the positive regulation of NMDA glutamate receptor activity by promoting the L-glutamate secretion through interaction with BEST1. Reduces keratinocyte intercellular adhesion, via interacting with PKP1 and sequestering it in the cytoplasm, thereby reducing its incorporation into desmosomes. Plays a role in mitochondrial protein catabolic process (also named MALM) that promotes the degradation of damaged proteins inside mitochondria. In Bos taurus (Bovine), this protein is 14-3-3 protein gamma.